The chain runs to 231 residues: Ribose-5-phosphate isomerase A (231 aa).

Residues 28-31, 83-86, and 96-99 contribute to the substrate site; these read TGST, DGAD, and KGGG. The active-site Proton acceptor is the Glu-105. A substrate-binding site is contributed by Lys-123.

Belongs to the ribose 5-phosphate isomerase family. In terms of assembly, homodimer.

It carries out the reaction aldehydo-D-ribose 5-phosphate = D-ribulose 5-phosphate. It participates in carbohydrate degradation; pentose phosphate pathway; D-ribose 5-phosphate from D-ribulose 5-phosphate (non-oxidative stage): step 1/1. In terms of biological role, catalyzes the reversible conversion of ribose-5-phosphate to ribulose 5-phosphate. This Rhizobium meliloti (strain 1021) (Ensifer meliloti) protein is Ribose-5-phosphate isomerase A.